A 438-amino-acid polypeptide reads, in one-letter code: Adenosylhomocysteinase (438 aa).

Residues Thr64, Asp139, and Glu164 each contribute to the substrate site. 165–167 is a binding site for NAD(+); it reads TTT. Residues Lys194 and Asp198 each contribute to the substrate site. NAD(+)-binding positions include Asn199, 228–233, Glu251, Asn286, 307–309, and Asn352; these read GYGDVG and IGH.

This sequence belongs to the adenosylhomocysteinase family. NAD(+) serves as cofactor.

The protein resides in the cytoplasm. It catalyses the reaction S-adenosyl-L-homocysteine + H2O = L-homocysteine + adenosine. It participates in amino-acid biosynthesis; L-homocysteine biosynthesis; L-homocysteine from S-adenosyl-L-homocysteine: step 1/1. In terms of biological role, may play a key role in the regulation of the intracellular concentration of adenosylhomocysteine. The protein is Adenosylhomocysteinase of Coxiella burnetii (strain CbuK_Q154) (Coxiella burnetii (strain Q154)).